The following is a 704-amino-acid chain: Ion-translocating oxidoreductase complex subunit C (704 aa).

4Fe-4S ferredoxin-type domains are found at residues 368-397 (MGAPQEEKSCIRCSACADACPADLLPQQLY) and 407-436 (KATAHHIADCIECGACAWVCPSNIPLVQYF). Positions 377, 380, 383, 387, 416, 419, 422, and 426 each coordinate [4Fe-4S] cluster. Residues 535 to 684 (ARAKQAAHPM…PADPRKAAVA (150 aa)) are disordered. The span at 556–565 (KAAVEAAIAR) shows a compositional bias: low complexity.

It belongs to the 4Fe4S bacterial-type ferredoxin family. RnfC subfamily. The complex is composed of six subunits: RsxA, RsxB, RsxC, RsxD, RsxE and RsxG. Requires [4Fe-4S] cluster as cofactor.

It localises to the cell inner membrane. Its function is as follows. Part of a membrane-bound complex that couples electron transfer with translocation of ions across the membrane. Required to maintain the reduced state of SoxR. In Salmonella paratyphi C (strain RKS4594), this protein is Ion-translocating oxidoreductase complex subunit C.